Consider the following 310-residue polypeptide: MNGLSLSELCCLFCCPPCPGRIAAKLAFLPPEATYSLVPEPEPGPGGAGAAPLGTLRASSGAPGRWKLHLTERADFQYSQRELDTIEVFPTKSARGNRVSCMYVRCVPGARYTVLFSHGNAVDLGQMSSFYIGLGSRLHCNIFSYDYSGYGASSGRPSERNLYADIDAAWQALRTRYGISPDSIILYGQSIGTVPTVDLASRYECAAVVLHSPLTSGMRVAFPDTKKTYCFDAFPNIEKVSKITSPVLIIHGTEDEVIDFSHGLALYERCPKAVEPLWVEGAGHNDIELYSQYLERLRRFISQELPSQRA.

Active-site charge relay system residues include Ser-190, Asp-255, and His-284. At Ser-307 the chain carries Phosphoserine.

Belongs to the AB hydrolase superfamily. ABHD17 family. Post-translationally, palmitoylated on cysteine residues located in a cysteine cluster at the N-terminus which promotes membrane localization. Palmitoylation is required for post-synaptic localization and for depalmitoylating activity towards DLG4/PSD95.

It is found in the cell membrane. Its subcellular location is the endosome membrane. The protein localises to the cell projection. It localises to the dendritic spine. The protein resides in the postsynaptic density membrane. It carries out the reaction S-hexadecanoyl-L-cysteinyl-[protein] + H2O = L-cysteinyl-[protein] + hexadecanoate + H(+). Its activity is regulated as follows. Inhibited by palmostatin-B. Its function is as follows. Hydrolyzes fatty acids from S-acylated cysteine residues in proteins. Has depalmitoylating activity towards NRAS. Has depalmitoylating activity towards DLG4/PSD95. May have depalmitoylating activity towards MAP6. The protein is Alpha/beta hydrolase domain-containing protein 17A of Homo sapiens (Human).